Here is a 328-residue protein sequence, read N- to C-terminus: 2-oxoglutarate-dependent dioxygenase gloF (328 aa).

A Fe2OG dioxygenase domain is found at 175–289; that stretch reads DTSELRMNHY…RYSVAYFGKP (115 aa). Positions 201, 203, and 261 each coordinate Fe cation. Residue Arg-280 coordinates 2-oxoglutarate.

Belongs to the iron/ascorbate-dependent oxidoreductase family. Requires Fe(2+) as cofactor.

It functions in the pathway mycotoxin biosynthesis. Its function is as follows. 2-oxoglutarate-dependent dioxygenase; part of the gene cluster that mediates the biosynthesis of pneumocandins, lipohexapeptides of the echinocandin family that prevent fungal cell wall formation by non-competitive inhibition of beta-1,3-glucan synthase. The 10,12-dimethylmyristoyl side chain is synthesized by the reducing polyketide synthase gloL/GLPKS4. The thioesterase gloN/GLHYD exclusively interacts with gloL/GLPKS4 to maintain turnover of the polyketide side chain. The 10R,12S-dimethylmyristic acid is then transferred to the first thiolation domain of the nonribosomal peptide synthetase gloA/GLNRPS4 by the acyl-AMP ligase gloD/GLligase, followed by its acylation to L-ornithine to trigger elongation of the cyclic hexapeptide. L-ornithine, 4R-hydroxyl-L-proline (generated from L-proline by the dioxygenase gloF/GLOXY2), 3S-hydroxyl-L-homotyrosine (generated by gloG/GLHtyB, gloH/GLHtyA, gloI/GLHtyC, gloJ/GLHtyD and hydroxylated at C-3 by the dioxygenase gloM/GLOXY1), 3R-hydroxyl-L-glutamine (generated from L-glutamine probably by the dioxygenase gloE/GLOXY3) and 3S-hydroxyl-L-proline (generated from L-proline by the dioxygenase gloF/GLOXY2 to yield pneumocandin B0), or 3S-hydroxyl-4S-methyl-L-proline (generated from L-leucine by the dioxygenase gloC/GLOXY4 to yield pneumocandin A0) are sequentially added to the growing chain. The last C domain of gloA/GLNRPS4 is proposed to be responsible for cyclization by condensation to form the peptide bond between L-ornithine and 3S-hydroxyl-4S-methyl-L-proline (for pneumocandin A0) or 3S-hydroxyl-L-proline (for pneumocandin B0). Finally, the subsequent C-4 hydroxylation of 3S-hydroxyl-L-homotyrosine and L-ornithine dihydroxylation at C-4 and C-5 are performed by the cytochrome P450 monooxygenases gloP/GLP450-1 and gloO/GLP450-2, respectively. The sequence is that of 2-oxoglutarate-dependent dioxygenase gloF from Glarea lozoyensis (strain ATCC 20868 / MF5171).